Here is a 334-residue protein sequence, read N- to C-terminus: tRNA U34 carboxymethyltransferase (334 aa).

Residues K91, W105, K110, G130, 152-154, 181-182, M196, Y200, and R315 contribute to the carboxy-S-adenosyl-L-methionine site; these read DPT and IE.

The protein belongs to the class I-like SAM-binding methyltransferase superfamily. CmoB family. As to quaternary structure, homotetramer.

The catalysed reaction is carboxy-S-adenosyl-L-methionine + 5-hydroxyuridine(34) in tRNA = 5-carboxymethoxyuridine(34) in tRNA + S-adenosyl-L-homocysteine + H(+). Functionally, catalyzes carboxymethyl transfer from carboxy-S-adenosyl-L-methionine (Cx-SAM) to 5-hydroxyuridine (ho5U) to form 5-carboxymethoxyuridine (cmo5U) at position 34 in tRNAs. The chain is tRNA U34 carboxymethyltransferase from Klebsiella pneumoniae subsp. pneumoniae (strain ATCC 700721 / MGH 78578).